The following is a 296-amino-acid chain: PYK10-binding protein 2 (296 aa).

Residues Met-1–Ser-20 are disordered. Ala-2 is subject to N-acetylalanine. 2 consecutive Jacalin-type lectin domains span residues Ala-2–Pro-142 and Ala-150–Pro-293.

Belongs to the jacalin lectin family. As to quaternary structure, component of the PYK10 complex, at least composed of PYK10/BGLU23, BGLU21, BGLU22, JAL22, JAL23, PBP1/JAL30, PBP2/JAL31, JAL32, JAL33, JAL34, JAL35, GLL22 and GLL23.

Functionally, polymerizer-type lectin that may facilitate the correct polymerization of BGLU23/PYK10 upon tissue damage. Activates BGLU21, BGLU22 and BGLU23. This Arabidopsis thaliana (Mouse-ear cress) protein is PYK10-binding protein 2 (PBP2).